An 819-amino-acid polypeptide reads, in one-letter code: Nonribosomal peptide synthetase 9 (819 aa).

The adenylation (A) domain stretch occupies residues 202 to 591; sequence LQAPTQHAVR…GRKDTQAKIR (390 aa). The Carrier domain maps to 722–798; the sequence is QPRNERERLI…SLAEFLSSSS (77 aa). S759 carries the O-(pantetheine 4'-phosphoryl)serine modification.

It belongs to the NRP synthetase family.

The protein operates within secondary metabolite biosynthesis. In terms of biological role, nonribosomal peptide synthetase; part of the Fg3_54/C64 gene cluster that mediates the biosynthesis of the octapeptide fusaoctaxin A, a virulence factor that is required for cell-to-cell invasiveness of plant host. The 2 nonribosomal peptide synthetases NRPS9 and NRPS5 form an assembly line which likely utilizes GABA as a starter unit (loaded on the unique module M1 of NRPS9) and sequentially incorporates seven extender units composed of the residues L-Ala, L-allo-Ile, L-Ser, L-Val, L-Ser, L-Leu and L-Leu, respectively. During the process, each of the residues that are tethered on modules M3-M7 of NRPS5 containing an E domain can undergo an epimerization reaction to produce a D-configuration before the transpeptidation reaction occurs. The elongation of the peptidyl chain might be terminated by module M8-mediated L-Leu incorporation, followed by R domain-catalyzed 4 electron reduction to release the resulting octapeptide from the assembly line as an alcohol. Fusaoctaxin A is cleaved by the cluster specific ABC transporter FGM5 to the pentapeptide fusapentaxin A and the tripeptide fusatrixin A. The other enzymes from the cluster, FGM1, FGM2, FGM3 and FGM9 seem not to be involved in the biosynthesis of fusaoctaxin A and their functions have still to be determined. This is Nonribosomal peptide synthetase 9 from Gibberella zeae (strain ATCC MYA-4620 / CBS 123657 / FGSC 9075 / NRRL 31084 / PH-1) (Wheat head blight fungus).